The chain runs to 475 residues: Ribulose bisphosphate carboxylase large chain (475 aa).

Positions 1–2 (MV) are excised as a propeptide. An N-acetylproline modification is found at Pro-3. N6,N6,N6-trimethyllysine is present on Lys-14. Residues Asn-123 and Thr-173 each contribute to the substrate site. Residue Lys-175 is the Proton acceptor of the active site. A substrate-binding site is contributed by Lys-177. Mg(2+) contacts are provided by Lys-201, Asp-203, and Glu-204. Lys-201 is modified (N6-carboxylysine). The active-site Proton acceptor is the His-294. Arg-295, His-327, and Ser-379 together coordinate substrate.

The protein belongs to the RuBisCO large chain family. Type I subfamily. As to quaternary structure, heterohexadecamer of 8 large chains and 8 small chains. It depends on Mg(2+) as a cofactor.

The protein localises to the plastid. It is found in the chloroplast. The catalysed reaction is 2 (2R)-3-phosphoglycerate + 2 H(+) = D-ribulose 1,5-bisphosphate + CO2 + H2O. It catalyses the reaction D-ribulose 1,5-bisphosphate + O2 = 2-phosphoglycolate + (2R)-3-phosphoglycerate + 2 H(+). Its function is as follows. RuBisCO catalyzes two reactions: the carboxylation of D-ribulose 1,5-bisphosphate, the primary event in carbon dioxide fixation, as well as the oxidative fragmentation of the pentose substrate in the photorespiration process. Both reactions occur simultaneously and in competition at the same active site. This is Ribulose bisphosphate carboxylase large chain from Stigeoclonium helveticum (Green alga).